Reading from the N-terminus, the 269-residue chain is Formamidopyrimidine-DNA glycosylase (269 aa).

Proline 2 functions as the Schiff-base intermediate with DNA in the catalytic mechanism. Glutamate 3 serves as the catalytic Proton donor. Lysine 57 serves as the catalytic Proton donor; for beta-elimination activity. DNA-binding residues include histidine 90, arginine 109, and lysine 150. The FPG-type zinc finger occupies 235 to 269 (QVYGRHGEPCYTCGEFIQIAKYGQRSSFFCPSCQN). The active-site Proton donor; for delta-elimination activity is the arginine 259.

It belongs to the FPG family. As to quaternary structure, monomer. Zn(2+) serves as cofactor.

The catalysed reaction is Hydrolysis of DNA containing ring-opened 7-methylguanine residues, releasing 2,6-diamino-4-hydroxy-5-(N-methyl)formamidopyrimidine.. The enzyme catalyses 2'-deoxyribonucleotide-(2'-deoxyribose 5'-phosphate)-2'-deoxyribonucleotide-DNA = a 3'-end 2'-deoxyribonucleotide-(2,3-dehydro-2,3-deoxyribose 5'-phosphate)-DNA + a 5'-end 5'-phospho-2'-deoxyribonucleoside-DNA + H(+). In terms of biological role, involved in base excision repair of DNA damaged by oxidation or by mutagenic agents. Acts as a DNA glycosylase that recognizes and removes damaged bases. Has a preference for oxidized purines, such as 7,8-dihydro-8-oxoguanine (8-oxoG). Has AP (apurinic/apyrimidinic) lyase activity and introduces nicks in the DNA strand. Cleaves the DNA backbone by beta-delta elimination to generate a single-strand break at the site of the removed base with both 3'- and 5'-phosphates. This is Formamidopyrimidine-DNA glycosylase from Baumannia cicadellinicola subsp. Homalodisca coagulata.